The following is a 427-amino-acid chain: Peptidase B (427 aa).

Mn(2+)-binding residues include Lys195 and Asp200. The active site involves Lys207. Residues Asp218, Asp277, and Glu279 each contribute to the Mn(2+) site. Arg281 is an active-site residue.

The protein belongs to the peptidase M17 family. In terms of assembly, homohexamer. Requires Mn(2+) as cofactor.

It localises to the cytoplasm. The catalysed reaction is Release of an N-terminal amino acid, Xaa, from a peptide or arylamide. Xaa is preferably Glu or Asp but may be other amino acids, including Leu, Met, His, Cys and Gln.. Its function is as follows. Probably plays an important role in intracellular peptide degradation. This Escherichia coli (strain UTI89 / UPEC) protein is Peptidase B.